The chain runs to 412 residues: 4-hydroxy-3-methylbut-2-en-1-yl diphosphate synthase (ferredoxin) (412 aa).

The span at 1 to 12 (MQTLDRPNAPSQ) shows a compositional bias: polar residues. Residues 1-22 (MQTLDRPNAPSQQPYPEPVYPR) form a disordered region. [4Fe-4S] cluster contacts are provided by Cys314, Cys317, Cys348, and Glu355.

It belongs to the IspG family. [4Fe-4S] cluster serves as cofactor.

The catalysed reaction is (2E)-4-hydroxy-3-methylbut-2-enyl diphosphate + 2 oxidized [2Fe-2S]-[ferredoxin] + H2O = 2-C-methyl-D-erythritol 2,4-cyclic diphosphate + 2 reduced [2Fe-2S]-[ferredoxin] + H(+). Its pathway is isoprenoid biosynthesis; isopentenyl diphosphate biosynthesis via DXP pathway; isopentenyl diphosphate from 1-deoxy-D-xylulose 5-phosphate: step 5/6. In terms of biological role, converts 2C-methyl-D-erythritol 2,4-cyclodiphosphate (ME-2,4cPP) into 1-hydroxy-2-methyl-2-(E)-butenyl 4-diphosphate. The sequence is that of 4-hydroxy-3-methylbut-2-en-1-yl diphosphate synthase (ferredoxin) from Synechococcus sp. (strain JA-3-3Ab) (Cyanobacteria bacterium Yellowstone A-Prime).